The following is a 540-amino-acid chain: Suppressor of tumorigenicity 7 protein-like (540 aa).

4 helical membrane passes run 24–44 (WSWT…VYVL), 68–88 (FYVA…IFEW), 475–495 (LPFF…LAML), and 502–522 (LMGV…GFFA).

Belongs to the ST7 family.

It is found in the membrane. The polypeptide is Suppressor of tumorigenicity 7 protein-like (st7l) (Danio rerio (Zebrafish)).